The following is a 192-amino-acid chain: Glycerol-3-phosphate acyltransferase (192 aa).

5 consecutive transmembrane segments (helical) span residues 4–24, 54–74, 80–100, 112–132, and 154–174; these read MFWL…AILL, LAIL…LIAS, IAQQ…PVYF, AGVL…AWLL, and LLAW…LLIV.

The protein belongs to the PlsY family. In terms of assembly, probably interacts with PlsX.

The protein localises to the cell inner membrane. It catalyses the reaction an acyl phosphate + sn-glycerol 3-phosphate = a 1-acyl-sn-glycero-3-phosphate + phosphate. It functions in the pathway lipid metabolism; phospholipid metabolism. Functionally, catalyzes the transfer of an acyl group from acyl-phosphate (acyl-PO(4)) to glycerol-3-phosphate (G3P) to form lysophosphatidic acid (LPA). This enzyme utilizes acyl-phosphate as fatty acyl donor, but not acyl-CoA or acyl-ACP. In Pseudomonas syringae pv. syringae (strain B728a), this protein is Glycerol-3-phosphate acyltransferase.